A 427-amino-acid chain; its full sequence is Enolase (427 aa).

Glutamine 163 is a binding site for (2R)-2-phosphoglycerate. The active-site Proton donor is glutamate 205. Mg(2+) contacts are provided by aspartate 242, glutamate 285, and aspartate 312. (2R)-2-phosphoglycerate is bound by residues lysine 337, arginine 366, serine 367, and lysine 388. Lysine 337 (proton acceptor) is an active-site residue.

This sequence belongs to the enolase family. Mg(2+) serves as cofactor.

The protein resides in the cytoplasm. It localises to the secreted. It is found in the cell surface. The enzyme catalyses (2R)-2-phosphoglycerate = phosphoenolpyruvate + H2O. The protein operates within carbohydrate degradation; glycolysis; pyruvate from D-glyceraldehyde 3-phosphate: step 4/5. Catalyzes the reversible conversion of 2-phosphoglycerate (2-PG) into phosphoenolpyruvate (PEP). It is essential for the degradation of carbohydrates via glycolysis. The protein is Enolase of Paraburkholderia phymatum (strain DSM 17167 / CIP 108236 / LMG 21445 / STM815) (Burkholderia phymatum).